We begin with the raw amino-acid sequence, 301 residues long: Homoserine O-acetyltransferase (301 aa).

The active-site Acyl-thioester intermediate is Cys-142. 2 residues coordinate substrate: Lys-163 and Ser-192. The Proton acceptor role is filled by His-235. Residue Glu-237 is part of the active site. Substrate is bound at residue Arg-249.

Belongs to the MetA family.

The protein localises to the cytoplasm. The catalysed reaction is L-homoserine + acetyl-CoA = O-acetyl-L-homoserine + CoA. The protein operates within amino-acid biosynthesis; L-methionine biosynthesis via de novo pathway; O-acetyl-L-homoserine from L-homoserine: step 1/1. In terms of biological role, transfers an acetyl group from acetyl-CoA to L-homoserine, forming acetyl-L-homoserine. The sequence is that of Homoserine O-acetyltransferase from Succinatimonas hippei (strain DSM 22608 / JCM 16073 / KCTC 15190 / YIT 12066).